The sequence spans 329 residues: Ketol-acid reductoisomerase (NADP(+)) (329 aa).

The region spanning 2-182 is the KARI N-terminal Rossmann domain; the sequence is TQLFYDTDAD…GGTRAGILET (181 aa). Residues 25–28, Ser-51, Ser-53, and 83–86 each bind NADP(+); these read YGSQ and DEFQ. The active site involves His-108. Gly-134 serves as a coordination point for NADP(+). The KARI C-terminal knotted domain maps to 183-328; it reads NFKEETETDL…KGLRSMFSWL (146 aa). Asp-191, Glu-195, Glu-227, and Glu-231 together coordinate Mg(2+). Ser-252 lines the substrate pocket.

The protein belongs to the ketol-acid reductoisomerase family. Mg(2+) serves as cofactor.

It carries out the reaction (2R)-2,3-dihydroxy-3-methylbutanoate + NADP(+) = (2S)-2-acetolactate + NADPH + H(+). The catalysed reaction is (2R,3R)-2,3-dihydroxy-3-methylpentanoate + NADP(+) = (S)-2-ethyl-2-hydroxy-3-oxobutanoate + NADPH + H(+). Its pathway is amino-acid biosynthesis; L-isoleucine biosynthesis; L-isoleucine from 2-oxobutanoate: step 2/4. It participates in amino-acid biosynthesis; L-valine biosynthesis; L-valine from pyruvate: step 2/4. Involved in the biosynthesis of branched-chain amino acids (BCAA). Catalyzes an alkyl-migration followed by a ketol-acid reduction of (S)-2-acetolactate (S2AL) to yield (R)-2,3-dihydroxy-isovalerate. In the isomerase reaction, S2AL is rearranged via a Mg-dependent methyl migration to produce 3-hydroxy-3-methyl-2-ketobutyrate (HMKB). In the reductase reaction, this 2-ketoacid undergoes a metal-dependent reduction by NADPH to yield (R)-2,3-dihydroxy-isovalerate. The chain is Ketol-acid reductoisomerase (NADP(+)) from Prochlorococcus marinus (strain MIT 9312).